A 319-amino-acid polypeptide reads, in one-letter code: L-threo-3-hydroxyaspartate ammonia-lyase (319 aa).

N6-(pyridoxal phosphate)lysine is present on Lys53. Pyridoxal 5'-phosphate is bound by residues Asn80, 179–183 (GGGGM), and Thr304.

It belongs to the serine/threonine dehydratase family. As to quaternary structure, may be either a monomer or a homodimer. Requires pyridoxal 5'-phosphate as cofactor. Mn(2+) is required as a cofactor. Mg(2+) serves as cofactor. It depends on Ca(2+) as a cofactor.

It carries out the reaction (3S)-3-hydroxy-L-aspartate = oxaloacetate + NH4(+). With respect to regulation, is strongly inhibited by hydroxylamine and EDTA in vitro. In terms of biological role, catalyzes the deamination of L-threo-3-hydroxyaspartate to oxaloacetate and ammonia. Shows a high specificity towards L-threo-3-hydroxyaspartate as other 3-hydroxyaminoacids, i.e. D,L-erythro- and D-threo-3-hydroxyaspartate, D-threonine, L-threonine, D,L-allothreonine, D,L-threo-3-phenylserine, D-serine, and L-serine, are not substrates for this enzyme. Exhibits no detectable serine and aspartate racemase activity. Might play a role in the detoxification of naturally occurring 3-hydroxyaspartate in Pseudomonas sp. T62 cells. This Pseudomonas sp protein is L-threo-3-hydroxyaspartate ammonia-lyase.